Here is a 952-residue protein sequence, read N- to C-terminus: Glutamate receptor 2.7 (952 aa).

Positions 1 to 32 are cleaved as a signal peptide; it reads MKVMNPRKTNNTFMYYFVLFVCGFVLMEGCLG. The Extracellular portion of the chain corresponds to 33–582; it reads QNQTTEIKVG…NTWVFLRPWS (550 aa). 5 N-linked (GlcNAc...) asparagine glycosylation sites follow: Asn34, Asn60, Asn355, Asn428, and Asn546. The chain crosses the membrane as a helical span at residues 583 to 603; it reads LDLWVTTACFFVFIGFIVWIL. Over 604–612 the chain is Cytoplasmic; the sequence is EHRVNTDFR. A helical transmembrane segment spans residues 613–633; it reads GPPHHQIGTSFWFAFSTMNFA. Residues 634-637 lie on the Cytoplasmic side of the membrane; that stretch reads HREK. Residues 638–658 form a helical membrane-spanning segment; the sequence is VVSNLARFVVLVWCFVVLVLI. Topologically, residues 659-821 are extracellular; sequence QSYTANLTSF…LSSNHLSLSS (163 aa). N-linked (GlcNAc...) asparagine glycosylation is found at Asn664, Asn728, Asn748, Asn784, and Asn809. A helical transmembrane segment spans residues 822–842; that stretch reads FWGLFLIAGIASFLALLIFVA. The Cytoplasmic portion of the chain corresponds to 843–952; it reads NFLYEHKHTL…ESAIIQCEGE (110 aa). The segment covering 889-908 has biased composition (polar residues); it reads VSSPITQGSSSPLTDQSTPL. Disordered stretches follow at residues 889–914 and 932–952; these read VSSPITQGSSSPLTDQSTPLPRSPEQ and FTTQSEQVEDEESAIIQCEGE.

This sequence belongs to the glutamate-gated ion channel (TC 1.A.10.1) family. As to quaternary structure, may form heteromers. As to expression, expressed predominantly in leaves.

The protein localises to the membrane. Its function is as follows. Glutamate-gated receptor that probably acts as a non-selective cation channel. May be involved in light-signal transduction and calcium homeostasis via the regulation of calcium influx into cells. In Arabidopsis thaliana (Mouse-ear cress), this protein is Glutamate receptor 2.7 (GLR2.7).